A 216-amino-acid chain; its full sequence is MIVSTKLQDHFEKITKILSGFGVEGCISYGEITFSIRDQRDIHLILKKLKKEYLFEQLTDVTAVDYLTYGQSDWQVGKVVSQTGFSRGRQQDFKTAAVDNRFEIIYQLLSMANNVRIRVKCKLKDAQIILVDSVSDLWPSANWAEREVYDMFGIYFNNHPDLRRVLTDYGFVGHPLRKDFPQTGYVEMRYDENLGRVVYEPVEIDDRVNTPRVIRN.

This sequence belongs to the complex I 30 kDa subunit family. As to quaternary structure, NDH-1 is composed of 14 different subunits. Subunits NuoB, C, D, E, F, and G constitute the peripheral sector of the complex.

The protein resides in the cell inner membrane. The enzyme catalyses a quinone + NADH + 5 H(+)(in) = a quinol + NAD(+) + 4 H(+)(out). Functionally, NDH-1 shuttles electrons from NADH, via FMN and iron-sulfur (Fe-S) centers, to quinones in the respiratory chain. The immediate electron acceptor for the enzyme in this species is believed to be ubiquinone. Couples the redox reaction to proton translocation (for every two electrons transferred, four hydrogen ions are translocated across the cytoplasmic membrane), and thus conserves the redox energy in a proton gradient. This is NADH-quinone oxidoreductase subunit C from Francisella tularensis subsp. holarctica (strain OSU18).